The primary structure comprises 181 residues: Caveolin-1 (181 aa).

Residues 1 to 107 lie on the Cytoplasmic side of the membrane; the sequence is MTGGLRDGEK…TKYWCYRLLT (107 aa). The segment at residues 108-128 is an intramembrane region (helical); that stretch reads ALVGIPLALIWGIFFAILSFI. Topologically, residues 129 to 181 are cytoplasmic; sequence HIWAVVPCVKSYLIEIHCISRVYSICVHTFCDPLFEAMGKCLGGVRIRTSKEV. S-palmitoyl cysteine attachment occurs at residues C136, C146, and C159.

It belongs to the caveolin family. In terms of assembly, homooligomer.

It is found in the golgi apparatus membrane. Its subcellular location is the cell membrane. The protein resides in the membrane. It localises to the caveola. The protein localises to the membrane raft. Its function is as follows. May act as a positive regulator of T-cell coactivation. May act as a scaffolding protein within caveolar membranes. Interacts directly with G-protein alpha subunits and can functionally regulate their activity. The sequence is that of Caveolin-1 (cav1) from Takifugu rubripes (Japanese pufferfish).